We begin with the raw amino-acid sequence, 141 residues long: Hemoglobin subunit mu (141 aa).

Positions 1–141 (MLSAQERAQI…VAVVLTEKYR (141 aa)) constitute a Globin domain. The heme b site is built by His-58 and His-87.

This sequence belongs to the globin family. As to expression, expressed in erythroid tissues.

The polypeptide is Hemoglobin subunit mu (HBM) (Homo sapiens (Human)).